The following is a 679-amino-acid chain: MSKNLLIELGLEELPAYVVTPSEKQLGERLATFLTENRLSFEDIQTFSTPRRLAVRVSGLADQQTDLTEDFKGPAKKIALDADGNFSKAAQGFVRGKGLTTDAIEFREVKGVEYVYVTKHEAGKPAKEVLLGVTEVLSAMTFPVSMHWANNSFEYIRPVHTLTVLLNDEALELDFLDIHSGRVSRGHRFLGTETTITSADSYEADLRSQFVIADAKERQEMIVEQIKTLEVEQGVQVDIDEDLLNEVLNLVEFPTAFMGSFEAKYLDVPEEVLVTSMKNHQRYFVVRDQAGHLMPNFVSVRNGNDQAIENVIKGNEKVLVARLEDGEFFWREDQKLQIADLVAKLTNVTFHEKIGSLAEHMDRTRVIAASLAKEANLSAEEVTAVDRAAQIYKFDLLTGMVGEFDELQGIMGEKYALLAGEDAAVARAIREHYLPDAAGGALPETKVGAVLALADKLDTLLSFFSVGLIPSGSNDPYALRRATQGIVRILDHFGWRIPMDKLVDSLYDLSFDSLTYANKADVMNFIRARVDKMMGKAAPKDIREAVLESSTFVVPEMLAAAEALVKASHTENYKPAVESLSRAFNLAEKADASVQVDPSLFENEQENTLSAAIQGLTLAGSAAQQLEQVFALSPVINDFFDNTMVMAEDQALKNNRLAILSDLVSKAKTIAAFNQLNTK.

The protein belongs to the class-II aminoacyl-tRNA synthetase family. In terms of assembly, tetramer of two alpha and two beta subunits.

It is found in the cytoplasm. It carries out the reaction tRNA(Gly) + glycine + ATP = glycyl-tRNA(Gly) + AMP + diphosphate. The polypeptide is Glycine--tRNA ligase beta subunit (Streptococcus pyogenes serotype M49 (strain NZ131)).